We begin with the raw amino-acid sequence, 399 residues long: Probable dual-specificity RNA methyltransferase RlmN (399 aa).

Glu-97 (proton acceptor) is an active-site residue. Residues Tyr-103–Ser-381 enclose the Radical SAM core domain. A disulfide bridge links Cys-110 with Cys-386. [4Fe-4S] cluster is bound by residues Cys-117, Cys-121, and Cys-124. S-adenosyl-L-methionine is bound by residues Gly-203–Glu-204, Ser-235, Ser-258–His-260, and Asn-343. The active-site S-methylcysteine intermediate is Cys-386.

This sequence belongs to the radical SAM superfamily. RlmN family. The cofactor is [4Fe-4S] cluster.

Its subcellular location is the cytoplasm. It catalyses the reaction adenosine(2503) in 23S rRNA + 2 reduced [2Fe-2S]-[ferredoxin] + 2 S-adenosyl-L-methionine = 2-methyladenosine(2503) in 23S rRNA + 5'-deoxyadenosine + L-methionine + 2 oxidized [2Fe-2S]-[ferredoxin] + S-adenosyl-L-homocysteine. The enzyme catalyses adenosine(37) in tRNA + 2 reduced [2Fe-2S]-[ferredoxin] + 2 S-adenosyl-L-methionine = 2-methyladenosine(37) in tRNA + 5'-deoxyadenosine + L-methionine + 2 oxidized [2Fe-2S]-[ferredoxin] + S-adenosyl-L-homocysteine. Functionally, specifically methylates position 2 of adenine 2503 in 23S rRNA and position 2 of adenine 37 in tRNAs. The protein is Probable dual-specificity RNA methyltransferase RlmN of Roseiflexus sp. (strain RS-1).